A 266-amino-acid chain; its full sequence is 4-hydroxy-tetrahydrodipicolinate reductase (266 aa).

10–15 provides a ligand contact to NAD(+); sequence GPRGRM. Lys-38 lines the NADP(+) pocket. NAD(+) contacts are provided by residues 99–101 and 125–128; these read GTT and APNF. The active-site Proton donor/acceptor is the His-155. His-156 provides a ligand contact to (S)-2,3,4,5-tetrahydrodipicolinate. The Proton donor role is filled by Lys-159. (S)-2,3,4,5-tetrahydrodipicolinate is bound at residue 165–166; that stretch reads GT.

This sequence belongs to the DapB family.

It is found in the cytoplasm. The catalysed reaction is (S)-2,3,4,5-tetrahydrodipicolinate + NAD(+) + H2O = (2S,4S)-4-hydroxy-2,3,4,5-tetrahydrodipicolinate + NADH + H(+). The enzyme catalyses (S)-2,3,4,5-tetrahydrodipicolinate + NADP(+) + H2O = (2S,4S)-4-hydroxy-2,3,4,5-tetrahydrodipicolinate + NADPH + H(+). Its pathway is amino-acid biosynthesis; L-lysine biosynthesis via DAP pathway; (S)-tetrahydrodipicolinate from L-aspartate: step 4/4. Catalyzes the conversion of 4-hydroxy-tetrahydrodipicolinate (HTPA) to tetrahydrodipicolinate. This chain is 4-hydroxy-tetrahydrodipicolinate reductase, found in Bacillus mycoides (strain KBAB4) (Bacillus weihenstephanensis).